We begin with the raw amino-acid sequence, 391 residues long: Outer membrane protein 41 (391 aa).

Residues Met-1–Ala-20 form the signal peptide. A Pyrrolidone carboxylic acid modification is found at Gln-21. The OmpA-like domain maps to Thr-282–Lys-391.

The protein belongs to the outer membrane OOP (TC 1.B.6) superfamily. As to quaternary structure, disulfide-linked heterodimer with Omp40.

It is found in the cell outer membrane. Its function is as follows. May have porin activity and function in peptidoglycan binding. The protein is Outer membrane protein 41 of Porphyromonas gingivalis (strain ATCC BAA-308 / W83).